The sequence spans 343 residues: Probable fructokinase-7 (343 aa).

Gly2 is subject to N-acetylglycine.

It belongs to the carbohydrate kinase PfkB family.

It catalyses the reaction D-fructose + ATP = D-fructose 6-phosphate + ADP + H(+). It participates in glycan biosynthesis; starch biosynthesis. May play an important role in maintaining the flux of carbon towards starch formation. The protein is Probable fructokinase-7 of Arabidopsis thaliana (Mouse-ear cress).